The following is a 413-amino-acid chain: Probable inactive allantoicase (413 aa).

It belongs to the allantoicase family.

In terms of biological role, the function of this enzyme is unclear as allantoicase activity is not known to exist in mammals. The polypeptide is Probable inactive allantoicase (Rattus norvegicus (Rat)).